Reading from the N-terminus, the 205-residue chain is MIGRLRGTLAEKQPPHLIIDVNGVGYELEVPMTTLYRLPKVGETVTVHTHLVVREDAHLLYGFHEKRERELFRELIRLNGVGPKLALALMSGLEADELVRCVQAQDTSALVRVPGVGKKTAERLLVELKDRFKAWETSPAMFTLVSDGPVPVSGASTAEADAVSALVSLGYKPQEASKAVSAIKDKAGLSSEELIRRSLKGMITK.

The tract at residues 1–64 (MIGRLRGTLA…EDAHLLYGFH (64 aa)) is domain I. Residues 65–143 (EKRERELFRE…AWETSPAMFT (79 aa)) are domain II. The tract at residues 144-153 (LVSDGPVPVS) is flexible linker. Residues 154-205 (GASTAEADAVSALVSLGYKPQEASKAVSAIKDKAGLSSEELIRRSLKGMITK) are domain III.

The protein belongs to the RuvA family. As to quaternary structure, homotetramer. Forms an RuvA(8)-RuvB(12)-Holliday junction (HJ) complex. HJ DNA is sandwiched between 2 RuvA tetramers; dsDNA enters through RuvA and exits via RuvB. An RuvB hexamer assembles on each DNA strand where it exits the tetramer. Each RuvB hexamer is contacted by two RuvA subunits (via domain III) on 2 adjacent RuvB subunits; this complex drives branch migration. In the full resolvosome a probable DNA-RuvA(4)-RuvB(12)-RuvC(2) complex forms which resolves the HJ.

Its subcellular location is the cytoplasm. Functionally, the RuvA-RuvB-RuvC complex processes Holliday junction (HJ) DNA during genetic recombination and DNA repair, while the RuvA-RuvB complex plays an important role in the rescue of blocked DNA replication forks via replication fork reversal (RFR). RuvA specifically binds to HJ cruciform DNA, conferring on it an open structure. The RuvB hexamer acts as an ATP-dependent pump, pulling dsDNA into and through the RuvAB complex. HJ branch migration allows RuvC to scan DNA until it finds its consensus sequence, where it cleaves and resolves the cruciform DNA. In Pseudomonas putida (strain W619), this protein is Holliday junction branch migration complex subunit RuvA.